A 173-amino-acid chain; its full sequence is Crossover junction endodeoxyribonuclease RuvC (173 aa).

Active-site residues include aspartate 8, glutamate 67, and aspartate 139. Mg(2+)-binding residues include aspartate 8, glutamate 67, and aspartate 139.

This sequence belongs to the RuvC family. As to quaternary structure, homodimer which binds Holliday junction (HJ) DNA. The HJ becomes 2-fold symmetrical on binding to RuvC with unstacked arms; it has a different conformation from HJ DNA in complex with RuvA. In the full resolvosome a probable DNA-RuvA(4)-RuvB(12)-RuvC(2) complex forms which resolves the HJ. Mg(2+) serves as cofactor.

It localises to the cytoplasm. It carries out the reaction Endonucleolytic cleavage at a junction such as a reciprocal single-stranded crossover between two homologous DNA duplexes (Holliday junction).. Functionally, the RuvA-RuvB-RuvC complex processes Holliday junction (HJ) DNA during genetic recombination and DNA repair. Endonuclease that resolves HJ intermediates. Cleaves cruciform DNA by making single-stranded nicks across the HJ at symmetrical positions within the homologous arms, yielding a 5'-phosphate and a 3'-hydroxyl group; requires a central core of homology in the junction. The consensus cleavage sequence is 5'-(A/T)TT(C/G)-3'. Cleavage occurs on the 3'-side of the TT dinucleotide at the point of strand exchange. HJ branch migration catalyzed by RuvA-RuvB allows RuvC to scan DNA until it finds its consensus sequence, where it cleaves and resolves the cruciform DNA. This is Crossover junction endodeoxyribonuclease RuvC from Erwinia tasmaniensis (strain DSM 17950 / CFBP 7177 / CIP 109463 / NCPPB 4357 / Et1/99).